Reading from the N-terminus, the 89-residue chain is Large ribosomal subunit protein bL27 (89 aa).

Positions 1 to 21 are disordered; the sequence is MAHKKAGGSSRNGRDSKGKRL.

The protein belongs to the bacterial ribosomal protein bL27 family.

This is Large ribosomal subunit protein bL27 from Bradyrhizobium sp. (strain BTAi1 / ATCC BAA-1182).